The following is a 789-amino-acid chain: Disintegrin and metalloproteinase domain-containing protein 1 (789 aa).

A signal peptide spans 1–68 (MSVAASASRS…LLIFLPSTLC (68 aa)). The 195-residue stretch at 238-432 (KYVEMFVVVN…HRGACLLDRP (195 aa)) folds into the Peptidase M12B domain. Asparagine 259 carries an N-linked (GlcNAc...) asparagine glycan. 4 disulfides stabilise this stretch: cysteine 348-cysteine 427, cysteine 388-cysteine 411, cysteine 390-cysteine 396, and cysteine 497-cysteine 517. Histidine 373 contacts Zn(2+). Residue glutamate 374 is part of the active site. Zn(2+) contacts are provided by histidine 377 and histidine 383. N-linked (GlcNAc...) asparagine glycosylation is present at asparagine 410. The 85-residue stretch at 441 to 525 (DAHCGNGVVE…ECPANSYMQD (85 aa)) folds into the Disintegrin domain. An N-linked (GlcNAc...) asparagine glycan is attached at asparagine 633. The 35-residue stretch at 666–700 (LQYDCHPQEMCHGNGVCNNFKHCHCDAGFSPPDCS) folds into the EGF-like domain. 3 cysteine pairs are disulfide-bonded: cysteine 670-cysteine 682, cysteine 676-cysteine 688, and cysteine 690-cysteine 699. The N-linked (GlcNAc...) asparagine glycan is linked to asparagine 720. The chain crosses the membrane as a helical span at residues 743–763 (VVVLVVPIFLIVLLCCLMLIA). Residues 764 to 789 (YLWSEVQEAVSPGSSSTTSSSESESD) are Cytoplasmic-facing.

Heterodimer with ADAM2/fertilin subunit beta.

It localises to the membrane. In terms of biological role, may be involved in sperm-egg fusion. The sequence is that of Disintegrin and metalloproteinase domain-containing protein 1 (Adam1) from Rattus norvegicus (Rat).